A 274-amino-acid chain; its full sequence is E3 ubiquitin-protein ligase complex SLX5-SLX8 subunit SLX8 (274 aa).

2 disordered regions span residues 1-117 (MARR…GNNI) and 136-159 (ANTPSASPMLDAAPPTTKPGTNSK). Positions 13–28 (ENLRIKRVRLESVRQN) are enriched in basic and acidic residues. At S50 the chain carries Phosphoserine. T66 carries the post-translational modification Phosphothreonine. Acidic residues predominate over residues 66 to 75 (TSEEDGDDDL). S67 bears the Phosphoserine mark. Residues 97–108 (GNHDRETMHTEE) show a composition bias toward basic and acidic residues. The segment at 206-250 (CPICFEPPETALMTLCGHVFCCPCLFQMVNSSRTCRQFGHCALCR) adopts an RING-type zinc-finger fold.

Component of the heterodimeric SUMO-targeted ubiquitin ligase (STUbL) complex composed of SLX5 and SLX8.

It localises to the nucleus. Its subcellular location is the chromosome. The protein localises to the centromere. It is found in the kinetochore. The enzyme catalyses S-ubiquitinyl-[E2 ubiquitin-conjugating enzyme]-L-cysteine + [acceptor protein]-L-lysine = [E2 ubiquitin-conjugating enzyme]-L-cysteine + N(6)-ubiquitinyl-[acceptor protein]-L-lysine.. The protein operates within protein modification; protein ubiquitination. Functionally, component of the SUMO-targeted ubiquitin ligase (STUbL) complex SLX5/SLX8 that mediates ubiquitination and subsequent desumoylation of sumoylated proteins and proteins containing SUMO-like domains for their degradation. The STUbL complex SLX5/SLX8 stimulates ubiquitin conjugating enzymes, including UBC1, UBC4, UBC5 and UBC13-MMS2, and mediates the proteolytic down-regulation of sumoylated proteins. The STUbL complex SLX5/SLX8 is involved in ubiquitin-mediated degradation of histone variant CSE4, preventing mislocalization to euchromatin. The complex plays an essential role in maintenance of chromosome stability and links SUMO-dependent ubiquitination to a centromere-specific function during mitosis. The complex is involved in proteolysis of spindle positioning protein KAR9 and ensures correct spindle function by regulating levels of microtubule-associated proteins. During replication, the complex helps to prevent DNA lesions via recombination and has a role in localizing the DNA damage protein DCD2. The complex especially ubiquitinates the nuclease YEN1 and prevents persistent accumulation of a fraction of YEN1 associated with sites of activity in late G2/M and helps maintain the balance between pro- and anti-crossover pathways during homologous recombination. It is also involved in ubiquitin-mediated degradation of DNA repair proteins RAD52 and RAD57. Finally, the complex is recruited to distinct genomic hotspots of non-H2B protein ubiquitination (ub-hotspots) by the sumoylated transcription factor-like protein EUC1 where it ubiquitinates EUC1 and presumably other targets. The chain is E3 ubiquitin-protein ligase complex SLX5-SLX8 subunit SLX8 (SLX8) from Saccharomyces cerevisiae (strain ATCC 204508 / S288c) (Baker's yeast).